Here is a 600-residue protein sequence, read N- to C-terminus: Elongation factor 4 (600 aa).

In terms of domain architecture, tr-type G spans 3–185; it reads KYIRNFSIIA…CLIHDIPHPQ (183 aa). GTP-binding positions include 15–20 and 132–135; these read DHGKST and NKID.

This sequence belongs to the TRAFAC class translation factor GTPase superfamily. Classic translation factor GTPase family. LepA subfamily.

The protein localises to the cell inner membrane. It catalyses the reaction GTP + H2O = GDP + phosphate + H(+). Functionally, required for accurate and efficient protein synthesis under certain stress conditions. May act as a fidelity factor of the translation reaction, by catalyzing a one-codon backward translocation of tRNAs on improperly translocated ribosomes. Back-translocation proceeds from a post-translocation (POST) complex to a pre-translocation (PRE) complex, thus giving elongation factor G a second chance to translocate the tRNAs correctly. Binds to ribosomes in a GTP-dependent manner. In Blochmanniella pennsylvanica (strain BPEN), this protein is Elongation factor 4.